The following is a 235-amino-acid chain: Putative 4'-phosphopantetheinyl transferase HI_0152 (235 aa).

Asp112, Glu114, and Glu155 together coordinate Mg(2+).

This sequence belongs to the P-Pant transferase superfamily. Gsp/Sfp/HetI/AcpT family. Mg(2+) is required as a cofactor.

May transfer the 4'-phosphopantetheine moiety from coenzyme A (CoA) to a serine residue of a carrier protein domain. The sequence is that of Putative 4'-phosphopantetheinyl transferase HI_0152 from Haemophilus influenzae (strain ATCC 51907 / DSM 11121 / KW20 / Rd).